Consider the following 122-residue polypeptide: Large ribosomal subunit protein uL24 (122 aa).

Belongs to the universal ribosomal protein uL24 family. As to quaternary structure, part of the 50S ribosomal subunit.

In terms of biological role, one of two assembly initiator proteins, it binds directly to the 5'-end of the 23S rRNA, where it nucleates assembly of the 50S subunit. Its function is as follows. One of the proteins that surrounds the polypeptide exit tunnel on the outside of the subunit. The sequence is that of Large ribosomal subunit protein uL24 from Renibacterium salmoninarum (strain ATCC 33209 / DSM 20767 / JCM 11484 / NBRC 15589 / NCIMB 2235).